Reading from the N-terminus, the 203-residue chain is MSEEISFVKEIDTGVEGLPKPEVKIENIVATVILENQLDLNLIETKIQDVDYNPDQFPGLVYRLESPRVTVLIFKSGKMVITGAKSINQLIHVVKKLLKAFADQGIPISGKPQIQIQNIVASANLKVYIDLEKAALEFENSLYEPEQFPGLIYRMDEPRVVMLIFSSGKMVITGAKMENEVYDAVKKVARKLKEADAIIGIAE.

2 consecutive repeat copies span residues 25–101 (IENI…LKAF) and 116–192 (IQNI…ARKL).

Belongs to the TBP family.

Its function is as follows. General factor that plays a role in the activation of archaeal genes transcribed by RNA polymerase. Binds specifically to the TATA box promoter element which lies close to the position of transcription initiation. This Aeropyrum pernix (strain ATCC 700893 / DSM 11879 / JCM 9820 / NBRC 100138 / K1) protein is TATA-box-binding protein (tbp).